The chain runs to 1231 residues: MANISSPFGQNEWLVEEMYRKFRDDPSSVDPSWHEFLVDYSPEPTSQPAAEPTRVTSPLVAERAAAAAPQAPPKPADTAAAGNGVVAALAAKTAVPPPAEGDEVAVLRGAAAAVVKNMSASLEVPTATSVRAVPAKLLIDNRIVINNQLKRTRGGKISFTHLLGYALVQAVKKFPNMNRHYTEVDGKPTAVTPAHTNLGLAIDLQGKDGKRSLVVAGIKRCETMRFAQFVTAYEDIVRRARDGKLTTEDFAGVTISLTNPGTIGTVHSVPRLMPGQGAIIGVGAMEYPAEFQGASEERIAELGIGKLITLTSTYDHRIIQGAESGDFLRTIHELLLSDGFWDEVFRELSIPYLPVRWSTDNPDSIVDKNARVMNLIAAYRNRGHLMADTDPLRLDKARFRSHPDLEVLTHGLTLWDLDRVFKVDGFAGAQYKKLRDVLGLLRDAYCRHIGVEYAHILDPEQKEWLEQRVETKHVKPTVAQQKYILSKLNAAEAFETFLQTKYVGQKRFSLEGAESVIPMMDAAIDQCAEHGLDEVVIGMPHRGRLNVLANIVGKPYSQIFTEFEGNLNPSQAHGSGDVKYHLGATGLYLQMFGDNDIQVSLTANPSHLEAVDPVLEGLVRAKQDLLDHGSIDSDGQRAFSVVPLMLHGDAAFAGQGVVAETLNLANLPGYRVGGTIHIIVNNQIGFTTAPEYSRSSEYCTDVAKMIGAPIFHVNGDDPEACVWVARLAVDFRQRFKKDVVIDMLCYRRRGHNEGDDPSMTNPYVYDVVDTKRGARKSYTEALIGRGDISMKEAEDALRDYQGQLERVFNEVRELEKHGVQPSESVESDQMIPAGLATAVDKSLLARIGDAFLALPNGFTAHPRVQPVLEKRREMAYEGKIDWAFGELLALGSLVAEGKLVRLSGQDSRRGTFSQRHSVLIDRHTGEEFTPLQLLATNSDGSPTGGKFLVYDSPLSEYAAVGFEYGYTVGNPDAVVLWEAQFGDFVNGAQSIIDEFISSGEAKWGQLSNVVLLLPHGHEGQGPDHTSARIERFLQLWAEGSMTIAMPSTPSNYFHLLRRHALDGIQRPLIVFTPKSMLRHKAAVSEIKDFTEIKFRSVLEEPTYEDGIGDRNKVSRILLTSGKLYYELAARKAKDNRNDLAIVRLEQLAPLPRRRLRETLDRYENVKEFFWVQEEPANQGAWPRFGLELPELLPDKLAGIKRISRRAMSAPSSGSSKVHAVEQQEILDEAFG.

Positions 1–41 (MANISSPFGQNEWLVEEMYRKFRDDPSSVDPSWHEFLVDYS) are 2-oxoglutarate dehydrogenase E1, N-terminal part. The segment at 38 to 79 (VDYSPEPTSQPAAEPTRVTSPLVAERAAAAAPQAPPKPADTA) is disordered. A linker region spans residues 42 to 88 (PEPTSQPAAEPTRVTSPLVAERAAAAAPQAPPKPADTAAAGNGVVAA). Residues 58-69 (PLVAERAAAAAP) show a composition bias toward low complexity. Positions 89-337 (LAAKTAVPPP…LRTIHELLLS (249 aa)) are succinyltransferase E2. Catalysis depends on His-316, which acts as the Proton acceptor; for succinyltransferase activity. The tract at residues 338–1231 (DGFWDEVFRE…QQEILDEAFG (894 aa)) is 2-oxoglutarate dehydrogenase E1, C-terminal part. Arg-542 is a thiamine diphosphate binding site. 2-oxoglutarate-binding residues include His-581 and Ser-606. 6 residues coordinate thiamine diphosphate: Ser-606, Leu-608, Asp-649, Ala-650, Ala-651, and Asn-682. Asp-649 provides a ligand contact to Mg(2+). Residues Asn-682 and Ile-684 each contribute to the Mg(2+) site. Residues 787–817 (DISMKEAEDALRDYQGQLERVFNEVRELEKH) are a coiled coil. His-1024 contributes to the 2-oxoglutarate binding site. 7 residues coordinate acetyl-CoA: Thr-1042, Arg-1058, Lys-1093, Ser-1096, Gln-1146, Arg-1153, and Arg-1154.

This sequence belongs to the 2-oxoacid dehydrogenase family. Kgd subfamily. In terms of assembly, homodimer. The 2-oxoglutarate dehydrogenase (ODH) complex contains multiple copies of three enzymatic components: 2-oxoglutarate dehydrogenase (E1), dihydrolipoamide succinyltransferase (E2) and lipoamide dehydrogenase (E3). Mg(2+) serves as cofactor. Thiamine diphosphate is required as a cofactor.

The enzyme catalyses glyoxylate + 2-oxoglutarate + H(+) = 2-hydroxy-3-oxoadipate + CO2. It carries out the reaction 2-oxoglutarate + H(+) = succinate semialdehyde + CO2. It catalyses the reaction N(6)-[(R)-lipoyl]-L-lysyl-[protein] + 2-oxoglutarate + H(+) = N(6)-[(R)-S(8)-succinyldihydrolipoyl]-L-lysyl-[protein] + CO2. The catalysed reaction is N(6)-[(R)-dihydrolipoyl]-L-lysyl-[protein] + succinyl-CoA = N(6)-[(R)-S(8)-succinyldihydrolipoyl]-L-lysyl-[protein] + CoA. The protein operates within carbohydrate metabolism; tricarboxylic acid cycle; succinate from 2-oxoglutarate (transferase route): step 1/2. It functions in the pathway carbohydrate metabolism; tricarboxylic acid cycle; succinyl-CoA from 2-oxoglutarate (dehydrogenase route): step 1/1. Alpha-ketoglutarate dehydrogenase and decarboxylase activities are inhibited by unphosphorylated GarA, and allosterically activated by acetyl-CoA, the main substrate of the TCA cycle. Functionally, shows three enzymatic activities that share a first common step, the attack of thiamine-PP on 2-oxoglutarate (alpha-ketoglutarate, KG), leading to the formation of an enamine-thiamine-PP intermediate upon decarboxylation. Thus, displays KGD activity, catalyzing the decarboxylation from five-carbon 2-oxoglutarate to four-carbon succinate semialdehyde (SSA). Also catalyzes C-C bond formation between the activated aldehyde formed after decarboxylation of alpha-ketoglutarate and the carbonyl of glyoxylate (GLX), to yield 2-hydroxy-3-oxoadipate (HOA), which spontaneously decarboxylates to form 5-hydroxylevulinate (HLA). And is also a component of the 2-oxoglutarate dehydrogenase (ODH) complex, that catalyzes the overall conversion of 2-oxoglutarate to succinyl-CoA and CO(2). The KG decarboxylase and KG dehydrogenase reactions provide two alternative, tightly regulated, pathways connecting the oxidative and reductive branches of the TCA cycle. The polypeptide is Multifunctional 2-oxoglutarate metabolism enzyme (kgd) (Mycobacterium tuberculosis (strain ATCC 25177 / H37Ra)).